Here is a 408-residue protein sequence, read N- to C-terminus: Aspartokinase 2 (408 aa).

An ATP-binding site is contributed by 7–10 (KFGG). 25–30 (RAIAEK) contributes to the substrate binding site. Ser41 contacts ATP. Substrate-binding positions include 47–49 (TDE), Glu74, 125–126 (LE), 150–153 (RGGS), and Ser153. ATP contacts are provided by residues 173–174 (TD) and 179–184 (FTTDPR). ACT domains follow at residues 264–337 (VTIY…TESK) and 343–408 (IVGS…PSAV). Residues 289-291 (NVD), Gln295, 354-355 (VA), 368-369 (LI), and 375-376 (SE) each bind substrate.

The protein belongs to the aspartokinase family. In terms of assembly, tetramer consisting of 2 isoforms Alpha (catalytic and regulation) and of a homodimer of 2 isoforms Beta (regulation).

The catalysed reaction is L-aspartate + ATP = 4-phospho-L-aspartate + ADP. It participates in amino-acid biosynthesis; L-lysine biosynthesis via DAP pathway; (S)-tetrahydrodipicolinate from L-aspartate: step 1/4. Its pathway is amino-acid biosynthesis; L-methionine biosynthesis via de novo pathway; L-homoserine from L-aspartate: step 1/3. The protein operates within amino-acid biosynthesis; L-threonine biosynthesis; L-threonine from L-aspartate: step 1/5. Its activity is regulated as follows. Lysine-sensitive. Regulated by degradation in response to starvation of cells for various nutrients. Ammonium starvation induced the fastest aspartokinase II decline, followed by amino acid starvation and glucose limitation. Its function is as follows. Catalyzes the phosphorylation of the beta-carboxyl group of aspartic acid with ATP to yield 4-phospho-L-aspartate, which is involved in the branched biosynthetic pathway leading to the biosynthesis of amino acids threonine, isoleucine and methionine. This chain is Aspartokinase 2 (lysC), found in Bacillus subtilis (strain 168).